Reading from the N-terminus, the 465-residue chain is UDP-N-acetylmuramoylalanine--D-glutamate ligase (465 aa).

ATP is bound at residue 127 to 133 (GSNGKST).

Belongs to the MurCDEF family.

The protein resides in the cytoplasm. It catalyses the reaction UDP-N-acetyl-alpha-D-muramoyl-L-alanine + D-glutamate + ATP = UDP-N-acetyl-alpha-D-muramoyl-L-alanyl-D-glutamate + ADP + phosphate + H(+). It participates in cell wall biogenesis; peptidoglycan biosynthesis. In terms of biological role, cell wall formation. Catalyzes the addition of glutamate to the nucleotide precursor UDP-N-acetylmuramoyl-L-alanine (UMA). The protein is UDP-N-acetylmuramoylalanine--D-glutamate ligase of Cereibacter sphaeroides (strain KD131 / KCTC 12085) (Rhodobacter sphaeroides).